The following is a 207-amino-acid chain: Dephospho-CoA kinase (207 aa).

The DPCK domain occupies 4–203 (VIGLTGGIAS…EEGYIEKPNY (200 aa)). 12–17 (ASGKST) contacts ATP.

It belongs to the CoaE family.

It localises to the cytoplasm. It carries out the reaction 3'-dephospho-CoA + ATP = ADP + CoA + H(+). The protein operates within cofactor biosynthesis; coenzyme A biosynthesis; CoA from (R)-pantothenate: step 5/5. Functionally, catalyzes the phosphorylation of the 3'-hydroxyl group of dephosphocoenzyme A to form coenzyme A. The chain is Dephospho-CoA kinase from Staphylococcus aureus (strain bovine RF122 / ET3-1).